We begin with the raw amino-acid sequence, 288 residues long: tRNA dimethylallyltransferase (288 aa).

Residue Gly-2 to Ser-9 participates in ATP binding. Thr-4 to Ser-9 contributes to the substrate binding site. The tract at residues Asp-27–Gln-30 is interaction with substrate tRNA.

The protein belongs to the IPP transferase family. Monomer. Mg(2+) serves as cofactor.

The catalysed reaction is adenosine(37) in tRNA + dimethylallyl diphosphate = N(6)-dimethylallyladenosine(37) in tRNA + diphosphate. Catalyzes the transfer of a dimethylallyl group onto the adenine at position 37 in tRNAs that read codons beginning with uridine, leading to the formation of N6-(dimethylallyl)adenosine (i(6)A). The sequence is that of tRNA dimethylallyltransferase from Frankia alni (strain DSM 45986 / CECT 9034 / ACN14a).